A 410-amino-acid chain; its full sequence is 2-epi-5-epi-valiolone synthase (410 aa).

NAD(+) is bound by residues Asp-66, 97-100 (ETLK), 130-134 (GVLMD), 154-155 (TT), Lys-167, Lys-176, and 194-197 (FLAT). Residue Lys-167 is part of the active site. A divalent metal cation-binding residues include Glu-209, His-280, and His-296.

It belongs to the sugar phosphate cyclases superfamily. EEVS family. It depends on NAD(+) as a cofactor. Co(2+) serves as cofactor.

The enzyme catalyses D-sedoheptulose 7-phosphate = 2-epi-5-epi-valiolone + phosphate. Its function is as follows. Catalyzes the cyclization of D-sedoheptulose 7-phosphate to 2-epi-5-epi-valiolone. Involved in salbostatin biosynthesis. This chain is 2-epi-5-epi-valiolone synthase, found in Streptomyces albus (strain ATCC 21838 / DSM 41398 / FERM P-419 / JCM 4703 / NBRC 107858).